An 84-amino-acid polypeptide reads, in one-letter code: Sec-independent protein translocase protein TatA (84 aa).

A helical membrane pass occupies residues 1–21; the sequence is MGGISIWQLLIVAVIVVLLFG. Basic and acidic residues-rich tracts occupy residues 42–55 and 64–84; these read AMSD…KTSQ and IADK…KEQV. The tract at residues 42-84 is disordered; sequence AMSDDDAKQDKTSQDADFTAKSIADKQGEAKKEDAKSQDKEQV.

Belongs to the TatA/E family. As to quaternary structure, the Tat system comprises two distinct complexes: a TatABC complex, containing multiple copies of TatA, TatB and TatC subunits, and a separate TatA complex, containing only TatA subunits. Substrates initially bind to the TatABC complex, which probably triggers association of the separate TatA complex to form the active translocon.

Its subcellular location is the cell inner membrane. In terms of biological role, part of the twin-arginine translocation (Tat) system that transports large folded proteins containing a characteristic twin-arginine motif in their signal peptide across membranes. TatA could form the protein-conducting channel of the Tat system. This chain is Sec-independent protein translocase protein TatA, found in Salmonella typhi.